The sequence spans 425 residues: UDP-N-acetylglucosamine 1-carboxyvinyltransferase (425 aa).

Position 23-24 (K23–N24) interacts with phosphoenolpyruvate. R100 contacts UDP-N-acetyl-alpha-D-glucosamine. C124 acts as the Proton donor in catalysis. At C124 the chain carries 2-(S-cysteinyl)pyruvic acid O-phosphothioketal. UDP-N-acetyl-alpha-D-glucosamine is bound by residues D313 and I335.

It belongs to the EPSP synthase family. MurA subfamily.

The protein localises to the cytoplasm. The catalysed reaction is phosphoenolpyruvate + UDP-N-acetyl-alpha-D-glucosamine = UDP-N-acetyl-3-O-(1-carboxyvinyl)-alpha-D-glucosamine + phosphate. It participates in cell wall biogenesis; peptidoglycan biosynthesis. In terms of biological role, cell wall formation. Adds enolpyruvyl to UDP-N-acetylglucosamine. The chain is UDP-N-acetylglucosamine 1-carboxyvinyltransferase from Wolbachia sp. subsp. Drosophila simulans (strain wRi).